We begin with the raw amino-acid sequence, 327 residues long: GPI-linked NAD(P)(+)--arginine ADP-ribosyltransferase 1 (327 aa).

The signal sequence occupies residues 1-22 (MQMPAMMSLLLVSVGLMEALQA). 2 disulfides stabilise this stretch: Cys53/Cys277 and Cys174/Cys224. Residue Asn65 is glycosylated (N-linked (GlcNAc...) asparagine). The TR mART core domain occupies 73–273 (QVYADSWTLA…IYLRALGKHS (201 aa)). Positions 121 and 179 each coordinate NAD(+). Catalysis depends on residues Arg179 and Ser202. Residue Ser233 coordinates NAD(+). Glu240 is a catalytic residue. Asn253 carries an N-linked (GlcNAc...) asparagine glycan. Ser295 is lipidated: GPI-anchor amidated serine. A propeptide spans 296–327 (AMGQSPLSAVWSLLLLLWFLVVRAFPDGPGLL) (removed in mature form).

Belongs to the Arg-specific ADP-ribosyltransferase family.

The protein localises to the sarcoplasmic reticulum membrane. It carries out the reaction L-arginyl-[protein] + NAD(+) = N(omega)-(ADP-D-ribosyl)-L-arginyl-[protein] + nicotinamide + H(+). Functionally, has ADP-ribosyltransferase activity toward GLP1R. This Homo sapiens (Human) protein is GPI-linked NAD(P)(+)--arginine ADP-ribosyltransferase 1 (ART1).